Reading from the N-terminus, the 125-residue chain is Ribosome-binding factor A (125 aa).

This sequence belongs to the RbfA family. In terms of assembly, monomer. Binds 30S ribosomal subunits, but not 50S ribosomal subunits or 70S ribosomes.

It is found in the cytoplasm. Its function is as follows. One of several proteins that assist in the late maturation steps of the functional core of the 30S ribosomal subunit. Associates with free 30S ribosomal subunits (but not with 30S subunits that are part of 70S ribosomes or polysomes). Required for efficient processing of 16S rRNA. May interact with the 5'-terminal helix region of 16S rRNA. The protein is Ribosome-binding factor A of Xylella fastidiosa (strain M12).